A 408-amino-acid polypeptide reads, in one-letter code: Aspartate aminotransferase (408 aa).

L-aspartate contacts are provided by Gly-45, Trp-134, and Asn-184. Lys-247 is subject to N6-(pyridoxal phosphate)lysine. Arg-382 is a binding site for L-aspartate.

The protein belongs to the class-I pyridoxal-phosphate-dependent aminotransferase family. As to quaternary structure, homodimer. Requires pyridoxal 5'-phosphate as cofactor.

It localises to the cytoplasm. It carries out the reaction L-aspartate + 2-oxoglutarate = oxaloacetate + L-glutamate. Catalyzes the reversible conversion of aspartate and 2-oxoglutarate to glutamate and oxaloacetate. Does not have prephenate aminotransferase activity. The protein is Aspartate aminotransferase of Streptomyces avermitilis (strain ATCC 31267 / DSM 46492 / JCM 5070 / NBRC 14893 / NCIMB 12804 / NRRL 8165 / MA-4680).